The primary structure comprises 970 residues: Sodium/calcium exchanger 1 (970 aa).

The signal sequence occupies residues 1-32; the sequence is MLQLRLLPTFSMGCHLLAVVALLFSHVDLISA. Over 33–71 the chain is Extracellular; it reads ETEMEGEGNETGECTGSYYCKKGVILPIWEPQDPSFGDK. The N-linked (GlcNAc...) asparagine glycan is linked to N41. The chain crosses the membrane as a helical span at residues 72 to 92; the sequence is IARATVYFVAMVYMFLGVSII. The Cytoplasmic portion of the chain corresponds to 93 to 133; that stretch reads ADRFMSSIEVITSQEKEITIKKPNGETTKTTVRIWNETVSN. Residues 134–154 form a helical membrane-spanning segment; it reads LTLMALGSSAPEILLSVIEVC. An Alpha-1 repeat occupies 138 to 178; that stretch reads ALGSSAPEILLSVIEVCGHNFTAGDLGPSTIVGSAAFNMFI. Topologically, residues 155–167 are extracellular; sequence GHNFTAGDLGPST. Residue N157 is glycosylated (N-linked (GlcNAc...) asparagine). Residues 168–188 form a helical membrane-spanning segment; the sequence is IVGSAAFNMFIIIALCVYVVP. Residues 189-201 lie on the Cytoplasmic side of the membrane; the sequence is DGETRKIKHLRVF. Residues 202-222 form a helical membrane-spanning segment; it reads FVTAAWSIFAYTWLYIILSVI. The Extracellular segment spans residues 223-228; the sequence is SPGVVE. The helical transmembrane segment at 229 to 249 threads the bilayer; that stretch reads VWEGLLTFFFFPICVVFAWVA. At 250–797 the chain is on the cytoplasmic side; the sequence is DRRLLFYKYV…FVPPTEYWNG (548 aa). Positions 251–270 are putative calmodulin-binding region; it reads RRLLFYKYVYKRYRAGKQRG. 2 positions are modified to phosphoserine: S282 and S389. Calx-beta domains follow at residues 393–493 and 524–624; these read VNTE…VHLS and ATVT…LEIG. Ca(2+) contacts are provided by E417, D453, D478, D479, I481, E483, E486, D530, D531, D532, E548, D584, D610, E611, E612, and E715. The helical transmembrane segment at 798 to 818 threads the bilayer; it reads WACFIVSILMIGILTAFIGDL. Residues 819–821 are Extracellular-facing; sequence ASH. A helical membrane pass occupies residues 822 to 842; that stretch reads FGCTIGLKDSVTAVVFVALGT. The Alpha-2 repeat unit spans residues 839-875; it reads ALGTSVPDTFASKVAATQDQYADASIGNVTGSNAVNV. The Cytoplasmic portion of the chain corresponds to 843 to 871; that stretch reads SVPDTFASKVAATQDQYADASIGNVTGSN. Residues 872–892 traverse the membrane as a helical segment; sequence AVNVFLGIGVAWSIAAIYHAA. The Extracellular segment spans residues 893–903; it reads NGEQFKVSPGT. Residues 904–924 traverse the membrane as a helical segment; sequence LAFSVTLFTIFAFINVGVLLY. Residues 925–941 are Cytoplasmic-facing; sequence RRRPEIGGELGGPRTAK. A helical membrane pass occupies residues 942–962; it reads LLTSCLFVLLWLLYIFFSSLE. At 963-970 the chain is on the extracellular side; that stretch reads AYCHIKGF.

It belongs to the Ca(2+):cation antiporter (CaCA) (TC 2.A.19) family. SLC8 subfamily. As to expression, cardiac sarcolemma (at protein level).

It localises to the cell membrane. Its subcellular location is the sarcolemma. It catalyses the reaction Ca(2+)(in) + 3 Na(+)(out) = Ca(2+)(out) + 3 Na(+)(in). With respect to regulation, activated by micromolar levels of Ca(2+). In the absence of regulatory Ca(2+), channels open rapidly, and then inactivate rapidly. Inactivation is enhanced by Na(+) and is inhibited by micromolar levels of Ca(2+). In terms of biological role, mediates the exchange of one Ca(2+) ion against three to four Na(+) ions across the cell membrane, and thereby contributes to the regulation of cytoplasmic Ca(2+) levels and Ca(2+)-dependent cellular processes. Contributes to Ca(2+) transport during excitation-contraction coupling in muscle. In a first phase, voltage-gated channels mediate the rapid increase of cytoplasmic Ca(2+) levels due to release of Ca(2+) stores from the endoplasmic reticulum. SLC8A1 mediates the export of Ca(2+) from the cell during the next phase, so that cytoplasmic Ca(2+) levels rapidly return to baseline. Required for normal embryonic heart development and the onset of heart contractions. The polypeptide is Sodium/calcium exchanger 1 (SLC8A1) (Canis lupus familiaris (Dog)).